The sequence spans 794 residues: Protein sel-1 homolog 1 (794 aa).

Positions 1 to 21 are cleaved as a signal peptide; the sequence is MQVHVGLTLLLCAVLLSSATA. Positions 20–91 are disordered; sequence TASSDDESNQ…EEEVSVGEEI (72 aa). An interaction with ERLEC1, OS9 and SYVN1 region spans residues 22-737; sequence SSDDESNQDE…DIFTQLDMDQ (716 aa). The Lumenal portion of the chain corresponds to 22–738; it reads SSDDESNQDE…IFTQLDMDQL (717 aa). Acidic residues-rich tracts occupy residues 23–32 and 62–77; these read SDDESNQDES and DSED…EEEE. Position 63 is a phosphoserine (Ser-63). Residues 122–170 form the Fibronectin type-II domain; sequence AHGEPCHFPFLFLDKEYDECTSDGRQDGRLWCATTYDYKTDEKWGFCET. 2 disulfide bridges follow: Cys-127/Cys-153 and Cys-141/Cys-168. 9 Sel1-like repeats span residues 183 to 218, 219 to 254, 255 to 290, 291 to 326, 373 to 409, 410 to 446, 447 to 482, 483 to 518, and 519 to 554; these read AEMI…GMNH, TKAL…EEGS, PKGQ…LGGN, LIAH…NHVA, VQAQ…NAGN, SHAM…DMGN, PVGQ…EQGW, VDGQ…QGGH, and ILAF…ERGR. Residues Asn-195 and Asn-217 are each glycosylated (N-linked (GlcNAc...) asparagine). A glycan (N-linked (GlcNAc...) asparagine) is linked at Asn-272. Residues 352–537 form an important for homodimerization and oligomerization region; sequence NSGMLEEDLI…MHASGTGVMR (186 aa). The N-linked (GlcNAc...) asparagine glycan is linked to Asn-431. Asn-608 carries N-linked (GlcNAc...) asparagine glycosylation. Sel1-like repeat units lie at residues 627 to 662 and 664 to 699; these read TVAR…EQQH and AQAM…EASP. The interval 643–723 is interaction with SYVN1; sequence TDVDYETAFI…VVYFLQYIRE (81 aa). The interval 738 to 794 is mediates retention in the endoplasmic reticulum; it reads LLGPEWDLYLMTIIALLLGTVIAYRQRQHQDVPVPRPPGPWPAPPQQEGPPEQQPPQ. A helical transmembrane segment spans residues 739 to 759; it reads LGPEWDLYLMTIIALLLGTVI. The Cytoplasmic segment spans residues 760-794; that stretch reads AYRQRQHQDVPVPRPPGPWPAPPQQEGPPEQQPPQ. The segment at 768 to 794 is disordered; sequence DVPVPRPPGPWPAPPQQEGPPEQQPPQ. Residues 771-794 show a composition bias toward pro residues; that stretch reads VPRPPGPWPAPPQQEGPPEQQPPQ.

It belongs to the sel-1 family. In terms of assembly, homodimer and homooligomer. May form a complex with ERLEC1, HSPA5, OS9, and SYVN1. Interacts with FOXRED2 and EDEM1. Interacts with LPL and LMF1; may stabilize the complex formed by LPL and LMF1 and thereby promote the export of LPL dimers. Component of the HRD1 complex, which comprises at least SYNV1/HRD1, DERL1/2, FAM8A1, HERPUD1/HERP, OS9, SEL1L and UBE2J1. SYNV1 assembles with SEL1L and FAM8A1 through its transmembrane domains, but interaction with its cytoplasmic domain is required to confer stability to FAM8A1 and enhance recruitment of HERPUD1. The interaction with SYNV1/HRD1 is direct. N-glycosylated.

The protein resides in the endoplasmic reticulum membrane. Plays a role in the endoplasmic reticulum quality control (ERQC) system also called ER-associated degradation (ERAD) involved in ubiquitin-dependent degradation of misfolded endoplasmic reticulum proteins. Enhances SYVN1 stability. Plays a role in LPL maturation and secretion. Required for normal differentiation of the pancreas epithelium, and for normal exocrine function and survival of pancreatic cells. May play a role in Notch signaling. The protein is Protein sel-1 homolog 1 (Sel1l) of Mesocricetus auratus (Golden hamster).